Here is a 162-residue protein sequence, read N- to C-terminus: NADH-quinone oxidoreductase subunit I (162 aa).

2 4Fe-4S ferredoxin-type domains span residues 54 to 83 and 93 to 122; these read RRYE…IESE and TRYD…ETQI. Positions 63, 66, 69, 73, 102, 105, 108, and 112 each coordinate [4Fe-4S] cluster.

The protein belongs to the complex I 23 kDa subunit family. As to quaternary structure, NDH-1 is composed of 14 different subunits. Subunits NuoA, H, J, K, L, M, N constitute the membrane sector of the complex. [4Fe-4S] cluster serves as cofactor.

The protein resides in the cell inner membrane. It carries out the reaction a quinone + NADH + 5 H(+)(in) = a quinol + NAD(+) + 4 H(+)(out). Its function is as follows. NDH-1 shuttles electrons from NADH, via FMN and iron-sulfur (Fe-S) centers, to quinones in the respiratory chain. The immediate electron acceptor for the enzyme in this species is believed to be ubiquinone. Couples the redox reaction to proton translocation (for every two electrons transferred, four hydrogen ions are translocated across the cytoplasmic membrane), and thus conserves the redox energy in a proton gradient. In Burkholderia pseudomallei (strain 668), this protein is NADH-quinone oxidoreductase subunit I.